Consider the following 249-residue polypeptide: 5'-nucleotidase SurE (249 aa).

Residues D8, D9, S39, and N91 each contribute to the a divalent metal cation site.

Belongs to the SurE nucleotidase family. A divalent metal cation is required as a cofactor.

It localises to the cytoplasm. The enzyme catalyses a ribonucleoside 5'-phosphate + H2O = a ribonucleoside + phosphate. In terms of biological role, nucleotidase that shows phosphatase activity on nucleoside 5'-monophosphates. The protein is 5'-nucleotidase SurE of Pseudomonas syringae pv. tomato (strain ATCC BAA-871 / DC3000).